The chain runs to 287 residues: Iodotyrosine deiodinase (287 aa).

Residues 15 to 34 (HWPSLFITLALIWIVKRLFF) traverse the membrane as a helical segment. Residues 96 to 100 (RRSIR), S125, and 125 to 126 (SG) each bind FMN. 3,5-diiodo-L-tyrosine-binding residues include A127, E154, Y158, and K179. Residues A127, E154, Y158, and K179 each contribute to the 3-iodo-L-tyrosine site. FMN is bound by residues 235 to 237 (VTT) and R277.

This sequence belongs to the nitroreductase family. In terms of assembly, homodimer. FMN is required as a cofactor. In terms of tissue distribution, expressed in spermatocytes.

It is found in the cell membrane. The catalysed reaction is 2 iodide + L-tyrosine + 2 NADP(+) = 3,5-diiodo-L-tyrosine + 2 NADPH + H(+). The enzyme catalyses iodide + L-tyrosine + NADP(+) = 3-iodo-L-tyrosine + NADPH. It carries out the reaction 3-iodo-L-tyrosine + iodide + NADP(+) = 3,5-diiodo-L-tyrosine + NADPH + H(+). It catalyses the reaction L-tyrosine + chloride + NADP(+) = 3-chloro-L-tyrosine + NADPH. The catalysed reaction is bromide + L-tyrosine + NADP(+) = 3-bromo-L-tyrosine + NADPH. Functionally, catalyzes the dehalogenation of halotyrosines such as 3-bromo-L-tyrosine, 3-chloro-L-tyrosine, 3-iodo-L-tyrosine and 3,5-diiodo-L-tyrosine. Activity towards 3-fluoro-L-tyrosine is weak. Important for male and female fertility. May be involved in maintaining the viability of sperm, both during development in the testes and storage in the female spermatheca. The protein is Iodotyrosine deiodinase of Drosophila melanogaster (Fruit fly).